A 174-amino-acid chain; its full sequence is Adenine phosphoribosyltransferase (174 aa).

The protein belongs to the purine/pyrimidine phosphoribosyltransferase family. As to quaternary structure, homodimer.

The protein localises to the cytoplasm. It carries out the reaction AMP + diphosphate = 5-phospho-alpha-D-ribose 1-diphosphate + adenine. Its pathway is purine metabolism; AMP biosynthesis via salvage pathway; AMP from adenine: step 1/1. Catalyzes a salvage reaction resulting in the formation of AMP, that is energically less costly than de novo synthesis. This chain is Adenine phosphoribosyltransferase, found in Nitrosomonas europaea (strain ATCC 19718 / CIP 103999 / KCTC 2705 / NBRC 14298).